The primary structure comprises 81 residues: Omega-conotoxin-like 3 (81 aa).

The N-terminal stretch at 1 to 22 is a signal peptide; the sequence is MKLTCMMIVAVLFLTASIFITA. The propeptide occupies 23–51; that stretch reads DNSRNGIENLPRMRRHEMKKPKASKLNKR. Cystine bridges form between Cys53–Cys71, Cys60–Cys75, and Cys70–Cys79.

It belongs to the conotoxin O1 superfamily. As to expression, expressed by the venom duct.

The protein resides in the secreted. Functionally, omega-conotoxins act at presynaptic membranes, they bind and block voltage-gated calcium channels (Cav). This chain is Omega-conotoxin-like 3, found in Conus imperialis (Imperial cone).